Consider the following 925-residue polypeptide: Eukaryotic translation initiation factor 3 subunit A (925 aa).

The interval 108–127 is disordered; the sequence is QAQTDAKEESNKDQAEEDLE. Residues 112–121 are compositionally biased toward basic and acidic residues; the sequence is DAKEESNKDQ. The region spanning 324–498 is the PCI domain; it reads FKFYSSQFVL…DTVSFAQDPF (175 aa). Disordered regions lie at residues 509 to 544 and 839 to 925; these read PESSTSDEAKNSESEEETSQETHADEEQNEQVFTRN and KEAL…AGRG. Coiled-coil stretches lie at residues 534–666 and 785–885; these read EEQN…MKKL and SVIA…SSRS. A compositionally biased stretch (basic and acidic residues) spans 839-880; it reads KEALAKEEELAKRRAERERINKERDEIARKQREIEELLEKKN. The span at 916–925 shows a compositional bias: basic residues; it reads RLKRMNAGRG.

It belongs to the eIF-3 subunit A family. Component of the eukaryotic translation initiation factor 3 (eIF-3) complex.

It is found in the cytoplasm. In terms of biological role, RNA-binding component of the eukaryotic translation initiation factor 3 (eIF-3) complex, which is involved in protein synthesis of a specialized repertoire of mRNAs and, together with other initiation factors, stimulates binding of mRNA and methionyl-tRNAi to the 40S ribosome. The eIF-3 complex specifically targets and initiates translation of a subset of mRNAs involved in cell proliferation. This Kluyveromyces lactis (strain ATCC 8585 / CBS 2359 / DSM 70799 / NBRC 1267 / NRRL Y-1140 / WM37) (Yeast) protein is Eukaryotic translation initiation factor 3 subunit A.